A 317-amino-acid polypeptide reads, in one-letter code: Dehydrogenase/reductase SDR family member 12 (317 aa).

NAD(+) is bound by residues Ser-50 and Ile-52. Ser-175 contributes to the substrate binding site. NAD(+) contacts are provided by Tyr-201, Lys-205, and Thr-234. Catalysis depends on Tyr-201, which acts as the Proton acceptor.

This sequence belongs to the short-chain dehydrogenases/reductases (SDR) family.

In terms of biological role, putative oxidoreductase. The polypeptide is Dehydrogenase/reductase SDR family member 12 (DHRS12) (Bos taurus (Bovine)).